A 24-amino-acid polypeptide reads, in one-letter code: Coenzyme PQQ synthesis protein A (24 aa).

Residues 16 to 20 (EITMY) constitute a cross-link (pyrroloquinoline quinone (Glu-Tyr)).

It belongs to the PqqA family.

The protein operates within cofactor biosynthesis; pyrroloquinoline quinone biosynthesis. Its function is as follows. Required for coenzyme pyrroloquinoline quinone (PQQ) biosynthesis. PQQ is probably formed by cross-linking a specific glutamate to a specific tyrosine residue and excising these residues from the peptide. This is Coenzyme PQQ synthesis protein A from Cupriavidus taiwanensis (strain DSM 17343 / BCRC 17206 / CCUG 44338 / CIP 107171 / LMG 19424 / R1) (Ralstonia taiwanensis (strain LMG 19424)).